Here is a 1371-residue protein sequence, read N- to C-terminus: Probable serine/threonine-protein kinase DDB_G0293292 (1371 aa).

2 Protein kinase domains span residues Asn9–Thr269 and Phe1131–Leu1371. ATP is bound by residues Ile15–Lys23 and Lys39. Asp143 functions as the Proton acceptor in the catalytic mechanism.

This sequence belongs to the protein kinase superfamily. Ser/Thr protein kinase family.

It carries out the reaction L-seryl-[protein] + ATP = O-phospho-L-seryl-[protein] + ADP + H(+). The enzyme catalyses L-threonyl-[protein] + ATP = O-phospho-L-threonyl-[protein] + ADP + H(+). The sequence is that of Probable serine/threonine-protein kinase DDB_G0293292 from Dictyostelium discoideum (Social amoeba).